We begin with the raw amino-acid sequence, 341 residues long: S-adenosylmethionine:tRNA ribosyltransferase-isomerase (341 aa).

The protein belongs to the QueA family. In terms of assembly, monomer.

It is found in the cytoplasm. The catalysed reaction is 7-aminomethyl-7-carbaguanosine(34) in tRNA + S-adenosyl-L-methionine = epoxyqueuosine(34) in tRNA + adenine + L-methionine + 2 H(+). It functions in the pathway tRNA modification; tRNA-queuosine biosynthesis. In terms of biological role, transfers and isomerizes the ribose moiety from AdoMet to the 7-aminomethyl group of 7-deazaguanine (preQ1-tRNA) to give epoxyqueuosine (oQ-tRNA). This chain is S-adenosylmethionine:tRNA ribosyltransferase-isomerase, found in Clostridium tetani (strain Massachusetts / E88).